A 379-amino-acid polypeptide reads, in one-letter code: UDP-N-acetylglucosamine--N-acetylmuramyl-(pentapeptide) pyrophosphoryl-undecaprenol N-acetylglucosamine transferase (379 aa).

UDP-N-acetyl-alpha-D-glucosamine contacts are provided by residues 19–21 (TGG), asparagine 133, arginine 174, serine 207, isoleucine 261, and glutamine 306.

Belongs to the glycosyltransferase 28 family. MurG subfamily.

The protein localises to the cell inner membrane. It catalyses the reaction di-trans,octa-cis-undecaprenyl diphospho-N-acetyl-alpha-D-muramoyl-L-alanyl-D-glutamyl-meso-2,6-diaminopimeloyl-D-alanyl-D-alanine + UDP-N-acetyl-alpha-D-glucosamine = di-trans,octa-cis-undecaprenyl diphospho-[N-acetyl-alpha-D-glucosaminyl-(1-&gt;4)]-N-acetyl-alpha-D-muramoyl-L-alanyl-D-glutamyl-meso-2,6-diaminopimeloyl-D-alanyl-D-alanine + UDP + H(+). It participates in cell wall biogenesis; peptidoglycan biosynthesis. In terms of biological role, cell wall formation. Catalyzes the transfer of a GlcNAc subunit on undecaprenyl-pyrophosphoryl-MurNAc-pentapeptide (lipid intermediate I) to form undecaprenyl-pyrophosphoryl-MurNAc-(pentapeptide)GlcNAc (lipid intermediate II). The protein is UDP-N-acetylglucosamine--N-acetylmuramyl-(pentapeptide) pyrophosphoryl-undecaprenol N-acetylglucosamine transferase of Porphyromonas gingivalis (strain ATCC BAA-308 / W83).